A 475-amino-acid chain; its full sequence is Kynureninase (475 aa).

Pyridoxal 5'-phosphate-binding positions include Leu-141, Thr-142, 169-172, Asp-254, His-257, and Tyr-279; that span reads FPSD. N6-(pyridoxal phosphate)lysine is present on Lys-280. 2 residues coordinate pyridoxal 5'-phosphate: Trp-319 and Asn-347.

This sequence belongs to the kynureninase family. As to quaternary structure, homodimer. Pyridoxal 5'-phosphate serves as cofactor.

The protein resides in the cytoplasm. It catalyses the reaction L-kynurenine + H2O = anthranilate + L-alanine + H(+). The catalysed reaction is 3-hydroxy-L-kynurenine + H2O = 3-hydroxyanthranilate + L-alanine + H(+). It functions in the pathway amino-acid degradation; L-kynurenine degradation; L-alanine and anthranilate from L-kynurenine: step 1/1. Its pathway is cofactor biosynthesis; NAD(+) biosynthesis; quinolinate from L-kynurenine: step 2/3. In terms of biological role, catalyzes the cleavage of L-kynurenine (L-Kyn) and L-3-hydroxykynurenine (L-3OHKyn) into anthranilic acid (AA) and 3-hydroxyanthranilic acid (3-OHAA), respectively. The polypeptide is Kynureninase (bna5) (Sclerotinia sclerotiorum (strain ATCC 18683 / 1980 / Ss-1) (White mold)).